Here is a 245-residue protein sequence, read N- to C-terminus: Triosephosphate isomerase (245 aa).

9–11 (NWK) serves as a coordination point for substrate. Residue H92 is the Electrophile of the active site. E164 (proton acceptor) is an active-site residue. Substrate-binding positions include G170, S209, and 230-231 (GG).

Belongs to the triosephosphate isomerase family. In terms of assembly, homodimer.

Its subcellular location is the cytoplasm. The enzyme catalyses D-glyceraldehyde 3-phosphate = dihydroxyacetone phosphate. It functions in the pathway carbohydrate biosynthesis; gluconeogenesis. It participates in carbohydrate degradation; glycolysis; D-glyceraldehyde 3-phosphate from glycerone phosphate: step 1/1. Involved in the gluconeogenesis. Catalyzes stereospecifically the conversion of dihydroxyacetone phosphate (DHAP) to D-glyceraldehyde-3-phosphate (G3P). The protein is Triosephosphate isomerase of Cupriavidus pinatubonensis (strain JMP 134 / LMG 1197) (Cupriavidus necator (strain JMP 134)).